Here is a 538-residue protein sequence, read N- to C-terminus: MFS-type transporter tndD (538 aa).

Residues 1 to 42 (MSLSGSDSHLAVSPTLAEDMNSSDTSAGLAETPPADEEKRSI) are disordered. 2 N-linked (GlcNAc...) asparagine glycosylation sites follow: N21 and N71. Helical transmembrane passes span 81 to 101 (VGIV…FAPG), 115 to 135 (LLAG…PLIL), 153 to 173 (ICFT…MLIA), 203 to 223 (GGVI…GPVA), 235 to 255 (WVFW…FLFL), 309 to 329 (PIVA…YLMF), 348 to 368 (GLTF…IGAV), 394 to 414 (LPPL…YGWS), 422 to 442 (IVPI…FMCI), 444 to 464 (SYLV…NTVV), and 485 to 505 (LGWG…IPWA).

This sequence belongs to the major facilitator superfamily.

It localises to the membrane. Its function is as follows. MFS-type transporter; part of the gene cluster that mediates the biosynthesis of talaronoid C, a fusicoccane diterpenoid with an unprecedented tricyclic 5/8/6 ring system. The sequence is that of MFS-type transporter tndD from Aspergillus flavipes.